The following is a 151-amino-acid chain: Aspartate carbamoyltransferase regulatory chain (151 aa).

Zn(2+) is bound by residues C107, C112, C135, and C138.

This sequence belongs to the PyrI family. Contains catalytic and regulatory chains. The cofactor is Zn(2+).

Its function is as follows. Involved in allosteric regulation of aspartate carbamoyltransferase. In Thermococcus onnurineus (strain NA1), this protein is Aspartate carbamoyltransferase regulatory chain.